A 71-amino-acid chain; its full sequence is MPVIKVRENEPFDVALRRFKRSCEKAGILSEVRRREHYEKPTAERKRKKAAAVKRHMKKLSRDNARRVKLY.

The segment at 37 to 71 (HYEKPTAERKRKKAAAVKRHMKKLSRDNARRVKLY) is disordered. The segment covering 45–59 (RKRKKAAAVKRHMKK) has biased composition (basic residues). Residues 60–71 (LSRDNARRVKLY) are compositionally biased toward basic and acidic residues.

Belongs to the bacterial ribosomal protein bS21 family.

In Pseudoalteromonas translucida (strain TAC 125), this protein is Small ribosomal subunit protein bS21.